A 509-amino-acid polypeptide reads, in one-letter code: Ankyrin repeat domain-containing protein 13C (509 aa).

Basic and acidic residues predominate over residues 1–19 (MTGEKIRSLHRDQKPSKDE). The tract at residues 1 to 42 (MTGEKIRSLHRDQKPSKDEDLLEPDEEATAGGTFTRTGKLKN) is disordered. 3 ANK repeats span residues 79–110 (DAYF…QKDN), 111–140 (HGNT…PVKV), and 144–173 (QGWS…QQSR).

It is found in the endoplasmic reticulum membrane. Its function is as follows. Acts as a molecular chaperone for G protein-coupled receptors, regulating their biogenesis and exit from the ER. This chain is Ankyrin repeat domain-containing protein 13C (ankrd13c), found in Xenopus tropicalis (Western clawed frog).